A 391-amino-acid chain; its full sequence is Inactive polyketide synthase 2 (391 aa).

The active site involves C164.

It belongs to the thiolase-like superfamily. Chalcone/stilbene synthases family. Homodimer.

This is Inactive polyketide synthase 2 (PKS2) from Rubus idaeus (Raspberry).